The sequence spans 321 residues: MPEQELLIGQEMNTLHAGSSTDGINVGNAGRTRDTQTGVEGETEIGSDEEDSIEDEGSSSGGNSTTERLVPHQLREQAARHIGKIGRHFNILDRLFKKRTQQSSDIQQGAMFDGVFSNLSAKPDTTETEGNNEQDIPPTYDEAAADMAPSYYGMDLNNSDIYYDEICIEGLPVGNIANLLWNIIVSTSFQFIGFLITYILHTSHAAKQGSRFGLGLTFIGYGYSMIPNDVTSKVGKNKSLNRMELEDPNEFDDVRLNSQSTTQDKFESHLNHGLDEEKQNIPWLAVFVAFLGLFITLKSIYDYIQVKKLEKKYLNQSQNQA.

The interval 1 to 71 is disordered; that stretch reads MPEQELLIGQ…GNSTTERLVP (71 aa). Residues 1–178 are Extracellular-facing; it reads MPEQELLIGQ…EGLPVGNIAN (178 aa). Polar residues predominate over residues 11–23; the sequence is EMNTLHAGSSTDG. Acidic residues predominate over residues 41 to 57; it reads GETEIGSDEEDSIEDEG. Residues 179-199 traverse the membrane as a helical segment; it reads LLWNIIVSTSFQFIGFLITYI. The Cytoplasmic segment spans residues 200–211; the sequence is LHTSHAAKQGSR. Residues 212–232 form a helical membrane-spanning segment; it reads FGLGLTFIGYGYSMIPNDVTS. Topologically, residues 233–280 are extracellular; it reads KVGKNKSLNRMELEDPNEFDDVRLNSQSTTQDKFESHLNHGLDEEKQN. A helical membrane pass occupies residues 281 to 301; it reads IPWLAVFVAFLGLFITLKSIY. Residues 302–321 lie on the Cytoplasmic side of the membrane; the sequence is DYIQVKKLEKKYLNQSQNQA. K312 participates in a covalent cross-link: Glycyl lysine isopeptide (Lys-Gly) (interchain with G-Cter in ubiquitin).

It belongs to the BSD2 family.

It localises to the endoplasmic reticulum. The protein resides in the vacuole. The protein localises to the membrane. Its function is as follows. Required for homeostasis of heavy metal ions such as cadmium, cobalt and copper. Controls metal ion transport and prevents metal hyperaccumulation by negatively regulating the SMF1 and SMF2 metal transport systems. Under manganese-replete conditions facilitates trafficking of SMF1 and SMF2 metal transporters to the vacuole where they are degraded. The sequence is that of Metal homeostatis protein BSD2 (BSD2) from Saccharomyces cerevisiae (strain ATCC 204508 / S288c) (Baker's yeast).